The following is a 406-amino-acid chain: L-cysteine:1D-myo-inositol 2-amino-2-deoxy-alpha-D-glucopyranoside ligase (406 aa).

Cysteine 45 contacts Zn(2+). Residues 45 to 48 (CGIT), threonine 60, and 83 to 85 (NIT) contribute to the L-cysteinyl-5'-AMP site. The 'HIGH' region motif lies at 47-57 (ITPYDATHMGH). Positions 185 to 190 (ERGGDP) match the 'ERGGDP' region motif. An L-cysteinyl-5'-AMP-binding site is contributed by tryptophan 225. Cysteine 229 lines the Zn(2+) pocket. Position 247–249 (247–249 (GSD)) interacts with L-cysteinyl-5'-AMP. Histidine 254 contacts Zn(2+). Valine 281 is an L-cysteinyl-5'-AMP binding site. A 'KMSKS' region motif is present at residues 287–291 (KMSKS).

It belongs to the class-I aminoacyl-tRNA synthetase family. MshC subfamily. Monomer. It depends on Zn(2+) as a cofactor.

It carries out the reaction 1D-myo-inositol 2-amino-2-deoxy-alpha-D-glucopyranoside + L-cysteine + ATP = 1D-myo-inositol 2-(L-cysteinylamino)-2-deoxy-alpha-D-glucopyranoside + AMP + diphosphate + H(+). Catalyzes the ATP-dependent condensation of GlcN-Ins and L-cysteine to form L-Cys-GlcN-Ins. The chain is L-cysteine:1D-myo-inositol 2-amino-2-deoxy-alpha-D-glucopyranoside ligase from Kribbella flavida (strain DSM 17836 / JCM 10339 / NBRC 14399).